Here is a 353-residue protein sequence, read N- to C-terminus: Chloroplastic lipocalin (353 aa).

Low complexity predominate over residues 1-18; it reads MILLSSSISLSRPVSSQS. A disordered region spans residues 1–27; the sequence is MILLSSSISLSRPVSSQSFSPPAATST. The transit peptide at 1 to 39 directs the protein to the chloroplast; the sequence is MILLSSSISLSRPVSSQSFSPPAATSTRRSHSSVTVKCC. Cysteines 163 and 299 form a disulfide.

Belongs to the calycin superfamily. Lipocalin family. Expressed in leaves at low levels (at protein levels). Present in seeds.

The protein localises to the plastid. It localises to the chloroplast thylakoid lumen. Lipocalin that prevents thylakoidal membrane lipids peroxidation and confers protection against oxidative stress, especially mediated by singlet oxygen in response to high light and other stress (e.g. heat shocks). Required for seed longevity by ensuring polyunsaturated lipids integrity. The sequence is that of Chloroplastic lipocalin from Arabidopsis thaliana (Mouse-ear cress).